Reading from the N-terminus, the 360-residue chain is Phosphoserine aminotransferase (360 aa).

Position 42 (Arg-42) interacts with L-glutamate. Residues 76-77 (AS), Trp-102, Thr-152, Asp-172, and Gln-195 contribute to the pyridoxal 5'-phosphate site. Lys-196 carries the post-translational modification N6-(pyridoxal phosphate)lysine. Pyridoxal 5'-phosphate is bound at residue 237 to 238 (NT).

This sequence belongs to the class-V pyridoxal-phosphate-dependent aminotransferase family. SerC subfamily. Homodimer. Pyridoxal 5'-phosphate serves as cofactor.

It localises to the cytoplasm. The catalysed reaction is O-phospho-L-serine + 2-oxoglutarate = 3-phosphooxypyruvate + L-glutamate. It carries out the reaction 4-(phosphooxy)-L-threonine + 2-oxoglutarate = (R)-3-hydroxy-2-oxo-4-phosphooxybutanoate + L-glutamate. Its pathway is amino-acid biosynthesis; L-serine biosynthesis; L-serine from 3-phospho-D-glycerate: step 2/3. Its function is as follows. Catalyzes the reversible conversion of 3-phosphohydroxypyruvate to phosphoserine and of 3-hydroxy-2-oxo-4-phosphonooxybutanoate to phosphohydroxythreonine. The polypeptide is Phosphoserine aminotransferase (Bacillus thuringiensis subsp. konkukian (strain 97-27)).